A 333-amino-acid polypeptide reads, in one-letter code: Galactinol synthase 1 (333 aa).

Lys-104 is an active-site residue. The Mn(2+) site is built by Asp-120, Asp-122, and His-257.

This sequence belongs to the glycosyltransferase 8 family. Galactosyltransferase subfamily. A divalent metal cation serves as cofactor. As to expression, expressed in source leaves, specifically in the mesophyll.

Its subcellular location is the cytoplasm. It catalyses the reaction myo-inositol + UDP-alpha-D-galactose = alpha-D-galactosyl-(1-&gt;3)-1D-myo-inositol + UDP + H(+). Functionally, major galactinol synthase mainly involved in the biosynthesis of storage raffinose family oligosaccharides (RFOs) that function as osmoprotectants. May promote plant stress tolerance. This Ajuga reptans (Bugle) protein is Galactinol synthase 1 (GOLS1).